The primary structure comprises 790 residues: Aryl hydrocarbon receptor nuclear translocator (790 aa).

The segment covering 1–25 has biased composition (polar residues); sequence MAATTANPEMTSDVPSLGPNITSGN. Residues 1-98 are disordered; it reads MAATTANPEM…LARENHSEIE (98 aa). Residue Ala-2 is modified to N-acetylalanine. Residue Lys-58 forms a Glycyl lysine isopeptide (Lys-Gly) (interchain with G-Cter in SUMO2) linkage. A compositionally biased stretch (basic and acidic residues) spans 60 to 98; it reads LRCDEDQMSNDKERFARSDDEQSSADKERLARENHSEIE. A Phosphoserine modification is found at Ser-77. Positions 88-128 are DNA-binding; that stretch reads RLARENHSEIERRRRNKMTAYITELSDIVPTCSALARKPDK. A bHLH domain is found at 89-142; sequence LARENHSEIERRRRNKMTAYITELSDIVPTCSALARKPDKLTILRMAVSHMKSL. Positions 112 to 168 are required for heterodimer formation with HIF1A; sequence LSDIVPTCSALARKPDKLTILRMAVSHMKSLRGTGNTSTDGSYKPSFLTDQELKHLI. The tract at residues 112–264 is required for heterodimer formation with EPAS1; it reads LSDIVPTCSA…MCMGSRRSFI (153 aa). 2 PAS domains span residues 161-235 and 349-419; these read DQEL…LTGR and PNCT…VKLK. The tract at residues 167 to 171 is mediates the transcription activity and dimerization of the AHR:ARNT complex; it reads LILEA. The 44-residue stretch at 424-467 folds into the PAC domain; sequence SVMFRFRSKNREWLWTRTSSFTFQNPYSDEIEYIICTNTNVKNS. Polar residues-rich tracts occupy residues 465–480 and 629–672; these read KNSS…NPIQ and HSNP…GNFQ. Disordered stretches follow at residues 465–494, 629–695, and 729–790; these read KNSS…PLEV, HSNP…AAAY, and QWQG…SFSE. Low complexity predominate over residues 673–695; the sequence is SPSSFSSMSLSSTSTASSGAAAY. Polar residues predominate over residues 741–758; sequence SSEQHVQQPSTQQPNQPE.

In terms of assembly, monomer. Homodimer only upon binding to a DNA. Efficient DNA binding requires dimerization with another bHLH protein. Interacts with TACC3. Interacts with HIF1A, EPAS1, NPAS1 and NPAS3; forms a heterodimer that binds core DNA sequence 5'-TACGTG-3' within the hypoxia response element (HRE) of target gene promoters. Forms a heterodimer with AHRR, as well as with other bHLH proteins. Interacts with NOCA7. Interacts with TACC3. Interacts with AHR; the heterodimer ARNT:AHR binds to core DNA sequence 5'-TGCGTG-3' within the dioxin response element (DRE) of target gene promoters and activates their transcription. Interacts with SIM1 and NPAS4. As to expression, was expressed at almost the same level in all tissues except for the heart, liver, and small intestine.

The protein localises to the nucleus. Functionally, required for activity of the AHR. Upon ligand binding, AHR translocates into the nucleus, where it heterodimerizes with ARNT and induces transcription by binding to xenobiotic response elements (XRE). Not required for the ligand-binding subunit to translocate from the cytosol to the nucleus after ligand binding. The complex initiates transcription of genes involved in the regulation of a variety of biological processes, including angiogenesis, hematopoiesis, drug and lipid metabolism, cell motility and immune modulation. The heterodimer binds to core DNA sequence 5'-TACGTG-3' within the hypoxia response element (HRE) of target gene promoters and functions as a transcriptional regulator of the adaptive response to hypoxia. The heterodimer ARNT:AHR binds to core DNA sequence 5'-TGCGTG-3' within the dioxin response element (DRE) of target gene promoters and activates their transcription. The chain is Aryl hydrocarbon receptor nuclear translocator (ARNT) from Oryctolagus cuniculus (Rabbit).